Here is a 182-residue protein sequence, read N- to C-terminus: Putative manganese efflux pump MntP (182 aa).

6 helical membrane passes run 6–26, 37–57, 71–91, 101–121, 131–151, and 162–182; these read LIPLIIMAFALGMDAFSVSLG, ILYIGVTIGIFHIIMPFIGMV, HFAGAILLIGLGFYIVYSSIL, IGISLFVFAFGVSIDSFSVGL, IITILLFGFVSMLLAWIGLFI, and YGEIVGGIILVGFGLYLLFPI.

The protein belongs to the MntP (TC 9.B.29) family.

Its subcellular location is the cell membrane. Its function is as follows. Probably functions as a manganese efflux pump. The chain is Putative manganese efflux pump MntP from Bacillus cereus (strain ATCC 10987 / NRS 248).